The primary structure comprises 58 residues: Small ribosomal subunit protein bS21 (58 aa).

Residues 35–58 (REHYEKPSVKKKKKSEAARKRKFK) form a disordered region. A compositionally biased stretch (basic residues) spans 43 to 58 (VKKKKKSEAARKRKFK).

Belongs to the bacterial ribosomal protein bS21 family.

This is Small ribosomal subunit protein bS21 from Clostridium botulinum (strain Alaska E43 / Type E3).